The following is a 117-amino-acid chain: Large ribosomal subunit protein bL20 (117 aa).

It belongs to the bacterial ribosomal protein bL20 family.

Its function is as follows. Binds directly to 23S ribosomal RNA and is necessary for the in vitro assembly process of the 50S ribosomal subunit. It is not involved in the protein synthesizing functions of that subunit. In Rickettsia typhi (strain ATCC VR-144 / Wilmington), this protein is Large ribosomal subunit protein bL20.